The primary structure comprises 326 residues: Probable magnesium transporter NIPA7 (326 aa).

Residues 1–4 lie on the Extracellular side of the membrane; it reads MVSD. A helical transmembrane segment spans residues 5–25; sequence NEMGLVLAVSSSVFIGSSFIL. Residues 26–51 lie on the Cytoplasmic side of the membrane; the sequence is KKKGLKRAAANGTRAGFGGYTYLLEP. A helical membrane pass occupies residues 52–72; it reads LWWVGLVTMTFGEIANFVAYV. Topologically, residues 73-76 are extracellular; the sequence is YAPA. Residues 77 to 97 traverse the membrane as a helical segment; it reads VLVTPLGALSIIISAVLAHFL. The Cytoplasmic segment spans residues 98–104; it reads LDEKLRK. A helical transmembrane segment spans residues 105–125; it reads MGVWGCVCCIVGSVMIVIHAP. Residues 126–142 lie on the Extracellular side of the membrane; sequence QEQTPNSVEEIWKLAMQ. Residues 143-163 form a helical membrane-spanning segment; the sequence is PAFLIYVAISMSIVLALILYC. The Cytoplasmic segment spans residues 164 to 169; the sequence is EPLCGQ. The helical transmembrane segment at 170 to 190 threads the bilayer; that stretch reads TNILVYIGICSLMGSLTVMSI. Topologically, residues 191–209 are extracellular; sequence KAVGIAIKLTFEGINQIWY. A helical transmembrane segment spans residues 210-230; it reads PETWFFAMVAAICVVMQMIYL. Topologically, residues 231 to 240 are cytoplasmic; it reads NKALDTFNAA. Residues 241–261 traverse the membrane as a helical segment; the sequence is IVSPIYYVMFTTLTIVASAIM. Over 262-272 the chain is Extracellular; sequence FKDWNGQNTDS. Residues 273–293 form a helical membrane-spanning segment; that stretch reads IASEICGFITVLTGTVILHST. Topologically, residues 294–326 are cytoplasmic; sequence REEEQASPRRMRWQDSGKSFDEEHLTSLYSPEY.

It belongs to the NIPA (TC 2.A.7) family. Homodimer.

It is found in the cell membrane. Its subcellular location is the early endosome. Its function is as follows. Acts as a Mg(2+) transporter. Can also transport other divalent cations such as Fe(2+), Sr(2+), Ba(2+), Mn(2+) and Co(2+) but to a much less extent than Mg(2+). The protein is Probable magnesium transporter NIPA7 of Arabidopsis thaliana (Mouse-ear cress).